Consider the following 90-residue polypeptide: Putative sodium channel toxin Ts28 (90 aa).

Residues 1-23 (MKISLVTWLITALCLMEIEEIDG) form the signal peptide. One can recognise an LCN-type CS-alpha/beta domain in the interval 26 to 86 (PGNYPVDFQG…FWDVMKKQCD (61 aa)). 3 cysteine pairs are disulfide-bonded: Cys-40–Cys-60, Cys-46–Cys-65, and Cys-50–Cys-67.

Belongs to the long (3 C-C) scorpion toxin superfamily. In terms of assembly, monomer (edited version) and heterodimer (non-edited version) of this alpha chain and a beta chain (AC P0CI43). In terms of tissue distribution, expressed by the venom gland.

It localises to the secreted. Functionally, the edited BmKBTx-like may modulate voltage-gated sodium channels (Nav). The non-edited form is able to form a heterodimer. In orthologs, a heterodimer with LVP beta-chain induces lipolysis in rat adipocytes, which is mediated through the beta-2 adrenergic receptor pathway (ADRB2). Since no LVP beta-chains have been identified in the venom of this scorpion, it is possible that this protein is not involved in a lipolysis process. This chain is Putative sodium channel toxin Ts28, found in Tityus serrulatus (Brazilian scorpion).